A 752-amino-acid polypeptide reads, in one-letter code: Probable beta-glucosidase D (752 aa).

Residues 1-18 (MRFVSLAVGAALLGAAGA) form the signal peptide. 2 N-linked (GlcNAc...) asparagine glycosylation sites follow: Asn187 and Asn237. Residue Asp265 is part of the active site. N-linked (GlcNAc...) asparagine glycans are attached at residues Asn299, Asn343, Asn441, Asn510, Asn532, Asn571, Asn586, Asn638, Asn661, and Asn743.

The protein belongs to the glycosyl hydrolase 3 family.

Its subcellular location is the secreted. It carries out the reaction Hydrolysis of terminal, non-reducing beta-D-glucosyl residues with release of beta-D-glucose.. It functions in the pathway glycan metabolism; cellulose degradation. Functionally, beta-glucosidases are one of a number of cellulolytic enzymes involved in the degradation of cellulosic biomass. Catalyzes the last step releasing glucose from the inhibitory cellobiose. The sequence is that of Probable beta-glucosidase D (bglD) from Aspergillus flavus (strain ATCC 200026 / FGSC A1120 / IAM 13836 / NRRL 3357 / JCM 12722 / SRRC 167).